Reading from the N-terminus, the 271-residue chain is Formamidopyrimidine-DNA glycosylase (271 aa).

Residue Pro2 is the Schiff-base intermediate with DNA of the active site. Glu3 functions as the Proton donor in the catalytic mechanism. Lys58 serves as the catalytic Proton donor; for beta-elimination activity. DNA is bound by residues His92, Arg111, and Arg152. The FPG-type zinc-finger motif lies at 237–271; that stretch reads TVYGREGEPCKQCGRVLKHAMIGQRATVWCGSCQR. Catalysis depends on Arg261, which acts as the Proton donor; for delta-elimination activity.

This sequence belongs to the FPG family. As to quaternary structure, monomer. It depends on Zn(2+) as a cofactor.

It catalyses the reaction Hydrolysis of DNA containing ring-opened 7-methylguanine residues, releasing 2,6-diamino-4-hydroxy-5-(N-methyl)formamidopyrimidine.. It carries out the reaction 2'-deoxyribonucleotide-(2'-deoxyribose 5'-phosphate)-2'-deoxyribonucleotide-DNA = a 3'-end 2'-deoxyribonucleotide-(2,3-dehydro-2,3-deoxyribose 5'-phosphate)-DNA + a 5'-end 5'-phospho-2'-deoxyribonucleoside-DNA + H(+). Its function is as follows. Involved in base excision repair of DNA damaged by oxidation or by mutagenic agents. Acts as a DNA glycosylase that recognizes and removes damaged bases. Has a preference for oxidized purines, such as 7,8-dihydro-8-oxoguanine (8-oxoG). Has AP (apurinic/apyrimidinic) lyase activity and introduces nicks in the DNA strand. Cleaves the DNA backbone by beta-delta elimination to generate a single-strand break at the site of the removed base with both 3'- and 5'-phosphates. In Xanthomonas oryzae pv. oryzae (strain MAFF 311018), this protein is Formamidopyrimidine-DNA glycosylase.